The chain runs to 159 residues: ATP synthase subunit b 2 (159 aa).

A helical membrane pass occupies residues 1-21 (MDATFWALIGLIIFLAILAYL).

It belongs to the ATPase B chain family. In terms of assembly, F-type ATPases have 2 components, F(1) - the catalytic core - and F(0) - the membrane proton channel. F(1) has five subunits: alpha(3), beta(3), gamma(1), delta(1), epsilon(1). F(0) has three main subunits: a(1), b(2) and c(10-14). The alpha and beta chains form an alternating ring which encloses part of the gamma chain. F(1) is attached to F(0) by a central stalk formed by the gamma and epsilon chains, while a peripheral stalk is formed by the delta and b chains.

It localises to the cell inner membrane. Functionally, f(1)F(0) ATP synthase produces ATP from ADP in the presence of a proton or sodium gradient. F-type ATPases consist of two structural domains, F(1) containing the extramembraneous catalytic core and F(0) containing the membrane proton channel, linked together by a central stalk and a peripheral stalk. During catalysis, ATP synthesis in the catalytic domain of F(1) is coupled via a rotary mechanism of the central stalk subunits to proton translocation. In terms of biological role, component of the F(0) channel, it forms part of the peripheral stalk, linking F(1) to F(0). This Brucella anthropi (strain ATCC 49188 / DSM 6882 / CCUG 24695 / JCM 21032 / LMG 3331 / NBRC 15819 / NCTC 12168 / Alc 37) (Ochrobactrum anthropi) protein is ATP synthase subunit b 2.